A 553-amino-acid chain; its full sequence is Cytochrome P450 86A2 (553 aa).

Residues 2–20 (DVSNTMLLVAVVAAYWLWF) traverse the membrane as a helical segment. Heme is bound at residue Cys-459.

This sequence belongs to the cytochrome P450 family. Heme is required as a cofactor. As to expression, expressed in leaves, stems, flowers and siliques. Expressed at low levels in roots. Expressed in guard cells of cotyledons and leaves.

The protein localises to the membrane. The catalysed reaction is an organic molecule + reduced [NADPH--hemoprotein reductase] + O2 = an alcohol + oxidized [NADPH--hemoprotein reductase] + H2O + H(+). Its function is as follows. Catalyzes the omega-hydroxylation of various fatty acids (FA). Acts on saturated and unsaturated fatty acids with chain lengths from C12 to C18. Plays a major role in the biosynthesis of extracellular lipids. Involved in the biosynthesis of hydroxylated fatty acids required for cutin biosynthesis, cuticle development and repression of bacterial type III gene expression. This is Cytochrome P450 86A2 (CYP86A2) from Arabidopsis thaliana (Mouse-ear cress).